We begin with the raw amino-acid sequence, 249 residues long: AA9 family lytic polysaccharide monooxygenase A (249 aa).

A signal peptide spans 1-19; that stretch reads MRGPLCFTLIAIAVTSVVA. The Cu(2+) site is built by His20 and His97. A disulfide bond links Cys60 and Cys183. Residue His163 participates in O2 binding. Tyr180 contacts Cu(2+).

It belongs to the polysaccharide monooxygenase AA9 family. Cu(2+) is required as a cofactor.

The protein resides in the secreted. It catalyses the reaction [(1-&gt;4)-beta-D-glucosyl]n+m + reduced acceptor + O2 = 4-dehydro-beta-D-glucosyl-[(1-&gt;4)-beta-D-glucosyl]n-1 + [(1-&gt;4)-beta-D-glucosyl]m + acceptor + H2O.. Lytic polysaccharide monooxygenase (LPMO) that depolymerizes crystalline and amorphous polysaccharides via the oxidation of scissile alpha- or beta-(1-4)-glycosidic bonds, yielding C4 oxidation products. Catalysis by LPMOs requires the reduction of the active-site copper from Cu(II) to Cu(I) by a reducing agent and H(2)O(2) or O(2) as a cosubstrate. Active on cellulose and cello-oligosaccharides, as well as plant cell wall-derived hemicellulosic polysaccharides. Also active on cello-oligosaccharides such as cellohexaose, cellopentaose or cellotetraose. This is AA9 family lytic polysaccharide monooxygenase A from Armillaria gallica (Bulbous honey fungus).